The chain runs to 238 residues: uncharacterized protein (238 aa).

3 helical membrane passes run 75–95 (YAIFHIFLPFILTLLLYHNFY), 116–136 (IVLIFTYVMTVIIVYFSFSLI), and 172–192 (IQGLAHIILSLLLFILGLEVI). The tract at residues 200 to 238 (DVEMSSMRGQAITTEPASDNTMAEETDCNTSKDVESGSN) is disordered. Polar residues predominate over residues 206–220 (MRGQAITTEPASDNT). Residues 229–238 (TSKDVESGSN) show a composition bias toward basic and acidic residues.

It is found in the membrane. This is an uncharacterized protein from Schizosaccharomyces pombe (strain 972 / ATCC 24843) (Fission yeast).